Reading from the N-terminus, the 401-residue chain is Chalcone synthase 2 (401 aa).

Residue Cys-168 is part of the active site.

It belongs to the thiolase-like superfamily. Chalcone/stilbene synthases family.

It catalyses the reaction (E)-4-coumaroyl-CoA + 3 malonyl-CoA + 3 H(+) = 2',4,4',6'-tetrahydroxychalcone + 3 CO2 + 4 CoA. The protein operates within secondary metabolite biosynthesis; flavonoid biosynthesis. The primary product of this enzyme is 4,2',4',6'-tetrahydroxychalcone (also termed naringenin-chalcone or chalcone) which can under specific conditions spontaneously isomerize into naringenin. This Sorghum bicolor (Sorghum) protein is Chalcone synthase 2 (CHS2).